Reading from the N-terminus, the 92-residue chain is Small ribosomal subunit protein uS19 (92 aa).

The protein belongs to the universal ribosomal protein uS19 family.

Its function is as follows. Protein S19 forms a complex with S13 that binds strongly to the 16S ribosomal RNA. This chain is Small ribosomal subunit protein uS19, found in Vibrio atlanticus (strain LGP32) (Vibrio splendidus (strain Mel32)).